The sequence spans 173 residues: Protein-export protein SecB (173 aa).

The protein belongs to the SecB family. Homotetramer, a dimer of dimers. One homotetramer interacts with 1 SecA dimer.

The protein resides in the cytoplasm. In terms of biological role, one of the proteins required for the normal export of preproteins out of the cell cytoplasm. It is a molecular chaperone that binds to a subset of precursor proteins, maintaining them in a translocation-competent state. It also specifically binds to its receptor SecA. The polypeptide is Protein-export protein SecB (Ralstonia nicotianae (strain ATCC BAA-1114 / GMI1000) (Ralstonia solanacearum)).